Reading from the N-terminus, the 248-residue chain is MAGHSKWANIKHRKGAQDAKRGKIFTKLIKEITVAAKIGGGDLEANARLRLAVDKAKQANMPKDNIERAIKKGTGDLDGVTYEEGTFEGYGPGGVAVIVEFMTDNRTRTVADVRHSFNKFGGSLGVSGSVAFMFDRKGQIIFGENSDFEKIFEVALEAGAEDVNDEDGVTEVITAPADFETVRNTLAEQGLTPESAEVTMIPQNMTAVEGKQAESLMKMIDMLEDNDDVQNVFANFDISDEEMARIMG.

The protein belongs to the TACO1 family.

The protein resides in the cytoplasm. The protein is Probable transcriptional regulatory protein Pcar_2335 of Syntrophotalea carbinolica (strain DSM 2380 / NBRC 103641 / GraBd1) (Pelobacter carbinolicus).